The following is a 1527-amino-acid chain: DNA (cytosine-5)-methyltransferase 1A (1527 aa).

2 disordered regions span residues M1–A62 and G661–K718. Composition is skewed to acidic residues over residues E25–F36 and K664–V692. Residues S709–K718 are compositionally biased toward basic and acidic residues. BAH domains are found at residues L742–P874 and I910–P1049. The SAM-dependent MTase C5-type domain maps to L1092–K1526. The active site involves C1197.

The protein belongs to the class I-like SAM-binding methyltransferase superfamily. C5-methyltransferase family. As to expression, expressed in roots and inflorescences. Expressed in roots, panicles, anthers, pistils, endosperm and imbibed embryos. Expressed in tissues containing actively replicating and dividing cells, such as shoot and root meristems.

The protein resides in the nucleus. The catalysed reaction is a 2'-deoxycytidine in DNA + S-adenosyl-L-methionine = a 5-methyl-2'-deoxycytidine in DNA + S-adenosyl-L-homocysteine + H(+). Its function is as follows. Probably methylates CpG residues and maintains DNA methylation. May be involved in methylation-dependent gene silencing. May play a minor role in the maintenance of DNA methylation. This is DNA (cytosine-5)-methyltransferase 1A from Oryza sativa subsp. japonica (Rice).